We begin with the raw amino-acid sequence, 241 residues long: Protein McbE (241 aa).

Transmembrane regions (helical) follow at residues 17-35 (TPFS…FFFL), 54-72 (ISWF…NYCL), 105-123 (LIMS…LTGF), 131-149 (IVMI…MVSL), 163-181 (STIY…IVSL), and 212-230 (LMTI…ISAL).

Its subcellular location is the cell membrane. Together with two further proteins McbF and McbG this protein causes immunity to the peptide antibiotic microcin B17 (MccB17), which inhibits DNA replication in enterobacteriaceae. Immunity is determined by two different mechanisms. McbE is involved in the production of extracellular MccB17 and, in a complex with McbF it also serves as 'pump' for the export of active MccB17 from the cytoplasm to the periplasmic space. The chain is Protein McbE (mcbE) from Escherichia coli.